The chain runs to 467 residues: Putative sulfoquinovose importer (467 aa).

12 helical membrane passes run 17-37 (IAYGMGDVGSNLMLCIGTLYL), 54-74 (IIFLVAKFFTAFTDMLTGFLL), 88-108 (PFILYAAVPAALIATLQFIAT), 121-141 (ALFMMFGLSYSLMNCSYGAMI), 160-180 (GGATIGLLICTVAFIPLQSLF), 185-205 (VGYACAALMFSIGGFIFMMLC), 238-258 (LLVLCIANLCTLAAFNIKLAI), 275-295 (WMGFFSMGCILIGVLLVPLTV), 303-323 (VYLAGMVLWAVGDILNYFWGS), 325-345 (SFTFVMFSCVAFFGTAFVNSL), 379-399 (ISAALAGFLPGIMLTQIGYVP), and 414-434 (LIFIWPCALAIIAALTMGFFY).

Belongs to the sodium:galactoside symporter (TC 2.A.2) family.

The protein localises to the cell inner membrane. Its function is as follows. Could be involved in sulfoquinovose import. In Escherichia coli (strain K12), this protein is Putative sulfoquinovose importer (yihO).